The primary structure comprises 331 residues: 4-hydroxythreonine-4-phosphate dehydrogenase (331 aa).

2 residues coordinate substrate: His-137 and Thr-138. The a divalent metal cation site is built by His-167, His-212, and His-267. 3 residues coordinate substrate: Lys-275, Asn-284, and Arg-293.

The protein belongs to the PdxA family. Homodimer. Requires Zn(2+) as cofactor. The cofactor is Mg(2+). Co(2+) serves as cofactor.

The protein resides in the cytoplasm. It catalyses the reaction 4-(phosphooxy)-L-threonine + NAD(+) = 3-amino-2-oxopropyl phosphate + CO2 + NADH. The protein operates within cofactor biosynthesis; pyridoxine 5'-phosphate biosynthesis; pyridoxine 5'-phosphate from D-erythrose 4-phosphate: step 4/5. In terms of biological role, catalyzes the NAD(P)-dependent oxidation of 4-(phosphooxy)-L-threonine (HTP) into 2-amino-3-oxo-4-(phosphooxy)butyric acid which spontaneously decarboxylates to form 3-amino-2-oxopropyl phosphate (AHAP). In Yersinia pestis bv. Antiqua (strain Angola), this protein is 4-hydroxythreonine-4-phosphate dehydrogenase.